Reading from the N-terminus, the 220-residue chain is Cytidylate kinase (220 aa).

Position 9 to 17 (9 to 17) interacts with ATP; it reads GPAASGKST.

Belongs to the cytidylate kinase family. Type 1 subfamily.

It localises to the cytoplasm. The catalysed reaction is CMP + ATP = CDP + ADP. It carries out the reaction dCMP + ATP = dCDP + ADP. The chain is Cytidylate kinase from Thermotoga sp. (strain RQ2).